The sequence spans 435 residues: Tol-Pal system protein TolB (435 aa).

An N-terminal signal peptide occupies residues 1–24; that stretch reads MIPMPKMIRSLLLLFCLLPLGAQA.

Belongs to the TolB family. The Tol-Pal system is composed of five core proteins: the inner membrane proteins TolA, TolQ and TolR, the periplasmic protein TolB and the outer membrane protein Pal. They form a network linking the inner and outer membranes and the peptidoglycan layer.

The protein localises to the periplasm. In terms of biological role, part of the Tol-Pal system, which plays a role in outer membrane invagination during cell division and is important for maintaining outer membrane integrity. The chain is Tol-Pal system protein TolB from Thioalkalivibrio sulfidiphilus (strain HL-EbGR7).